Reading from the N-terminus, the 120-residue chain is uncharacterized protein (120 aa).

The disordered stretch occupies residues 79-120 (TGNEIPPEPEQEVVASPVTEQKKAEPSAPPKGSKKKKRGKKK). Basic residues predominate over residues 110–120 (GSKKKKRGKKK).

This is an uncharacterized protein from Schizosaccharomyces pombe (strain 972 / ATCC 24843) (Fission yeast).